The sequence spans 403 residues: Chorismate synthase (403 aa).

The NADP(+) site is built by Arg40 and Arg46. FMN-binding positions include 140 to 142 and 261 to 262; these read RSS and QA. A compositionally biased stretch (basic and acidic residues) spans 277–298; that stretch reads RRGSEAHDEMVRTDEGVDRETN. The segment at 277–307 is disordered; the sequence is RRGSEAHDEMVRTDEGVDRETNRAGGLEGGM. FMN-binding positions include Gly305, 320–324, and Arg346; that span reads KPIST.

It belongs to the chorismate synthase family. Homotetramer. It depends on FMNH2 as a cofactor.

It catalyses the reaction 5-O-(1-carboxyvinyl)-3-phosphoshikimate = chorismate + phosphate. Its pathway is metabolic intermediate biosynthesis; chorismate biosynthesis; chorismate from D-erythrose 4-phosphate and phosphoenolpyruvate: step 7/7. Its function is as follows. Catalyzes the anti-1,4-elimination of the C-3 phosphate and the C-6 proR hydrogen from 5-enolpyruvylshikimate-3-phosphate (EPSP) to yield chorismate, which is the branch point compound that serves as the starting substrate for the three terminal pathways of aromatic amino acid biosynthesis. This reaction introduces a second double bond into the aromatic ring system. The protein is Chorismate synthase of Corynebacterium aurimucosum (strain ATCC 700975 / DSM 44827 / CIP 107346 / CN-1) (Corynebacterium nigricans).